A 309-amino-acid polypeptide reads, in one-letter code: Testis-expressed protein 264 homolog (309 aa).

Over 1–3 (MPD) the chain is Lumenal. The chain crosses the membrane as a helical; Signal-anchor for type III membrane protein span at residues 4 to 24 (LLLLGLIGALTLLLLLTLLAF). At 25–309 (AGYSGLLTGV…ELSTPERGEE (285 aa)) the chain is on the cytoplasmic side. Residues 193 to 309 (PEVKETERKC…ELSTPERGEE (117 aa)) form a disordered region. Low complexity predominate over residues 208-225 (ATDTQTDGTGADTSDASS). Ser-238 and Ser-243 each carry phosphoserine. Residues 250–262 (GWDDGDNRSEHSY) show a composition bias toward basic and acidic residues. Residues 263-272 (SESGASGSSF) are compositionally biased toward low complexity. The LIR motif signature appears at 272 to 275 (FEEL).

In terms of assembly, interacts (via the LIR motif) with ATG8 family proteins MAP1LC3A, MAP1LC3B, GABARAP and GABARAPL1. Interacts with VCP/p97; bridging VCP/p97 to covalent DNA-protein cross-links (DPCs). Interacts with TOP1 (when sumoylated).

It is found in the endoplasmic reticulum membrane. The protein resides in the cytoplasmic vesicle. Its subcellular location is the autophagosome. It localises to the cytoplasm. The protein localises to the cytosol. It is found in the nucleus. The protein resides in the chromosome. Its function is as follows. Major reticulophagy (also called ER-phagy) receptor that acts independently of other candidate reticulophagy receptors to remodel subdomains of the endoplasmic reticulum into autophagosomes upon nutrient stress, which then fuse with lysosomes for endoplasmic reticulum turnover. The ATG8-containing isolation membrane (IM) cradles a tubular segment of TEX264-positive ER near a three-way junction, allowing the formation of a synapse of 2 juxtaposed membranes with trans interaction between the TEX264 and ATG8 proteins. Expansion of the IM would extend the capture of ER, possibly through a 'zipper-like' process involving continued trans TEX264-ATG8 interactions, until poorly understood mechanisms lead to the fission of relevant membranes and, ultimately, autophagosomal membrane closure. Also involved in the repair of covalent DNA-protein cross-links (DPCs) during DNA synthesis: acts by bridging VCP/p97 to covalent DNA-protein cross-links (DPCs) and initiating resolution of DPCs by SPRTN. The protein is Testis-expressed protein 264 homolog of Mus musculus (Mouse).